The sequence spans 222 residues: 25 kDa elongation factor 1-beta (222 aa).

Positions 75–94 (TSASAPAKQAPKKAASAPAK) are enriched in low complexity. The segment at 75–98 (TSASAPAKQAPKKAASAPAKQADE) is disordered.

Belongs to the EF-1-beta/EF-1-delta family. As to quaternary structure, EF-1 is composed of 4 subunits: alpha, beta, delta, and gamma.

Functionally, EF-1-beta and EF-1-delta stimulate the exchange of GDP bound to EF-1-alpha to GTP. The polypeptide is 25 kDa elongation factor 1-beta (Trypanosoma cruzi).